The chain runs to 464 residues: UDP-glycosyltransferase 76F2 (464 aa).

Residues S279, 338–340 (VNQ), 355–363 (HCGWNSTIE), and 377–380 (FSDQ) each bind UDP-alpha-D-glucose.

The protein belongs to the UDP-glycosyltransferase family.

The chain is UDP-glycosyltransferase 76F2 (UGT76F2) from Arabidopsis thaliana (Mouse-ear cress).